A 342-amino-acid polypeptide reads, in one-letter code: Thioredoxin reductase 2, mitochondrial (342 aa).

Residues 1–23 (MIKHIVSPFRTNFVGISKSVLSR) constitute a mitochondrion transit peptide. FAD contacts are provided by residues 34–37 (SGPA), 56–68 (EGMMANGIAAGGQ), 63–64 (IA), Gln68, Asn77, Val110, Cys168, Asp311, 311–320 (DVQDSRYRQA), and 318–320 (RQA). An intrachain disulfide couples Cys165 to Cys168.

It belongs to the class-II pyridine nucleotide-disulfide oxidoreductase family. As to quaternary structure, homodimer. FAD serves as cofactor.

The protein localises to the mitochondrion. It carries out the reaction [thioredoxin]-dithiol + NADP(+) = [thioredoxin]-disulfide + NADPH + H(+). In terms of biological role, acts on mitochondrial thioredoxin 3. Implicated in the defense against oxidative stress. The sequence is that of Thioredoxin reductase 2, mitochondrial from Saccharomyces cerevisiae (strain ATCC 204508 / S288c) (Baker's yeast).